A 286-amino-acid chain; its full sequence is 3-hydroxyanthranilate 3,4-dioxygenase (286 aa).

A domain A (catalytic) region spans residues 1-160 (MERRLGVRAW…SEQYRTGKPI (160 aa)). Residue arginine 43 participates in O2 binding. Histidine 47, glutamate 53, and histidine 91 together coordinate Fe cation. Position 53 (glutamate 53) interacts with substrate. The substrate site is built by arginine 95 and glutamate 105. The linker stretch occupies residues 161 to 177 (PDQLLKEPPFPLSTRSI). Residues 178-286 (MEPMSLDAWL…QDPACKKPLG (109 aa)) are domain B.

It belongs to the 3-HAO family. As to quaternary structure, monomer. It depends on Fe(2+) as a cofactor.

It localises to the cytoplasm. It is found in the cytosol. It catalyses the reaction 3-hydroxyanthranilate + O2 = (2Z,4Z)-2-amino-3-carboxymuconate 6-semialdehyde. It functions in the pathway cofactor biosynthesis; NAD(+) biosynthesis; quinolinate from L-kynurenine: step 3/3. Functionally, catalyzes the oxidative ring opening of 3-hydroxyanthranilate to 2-amino-3-carboxymuconate semialdehyde, which spontaneously cyclizes to quinolinate. The protein is 3-hydroxyanthranilate 3,4-dioxygenase of Homo sapiens (Human).